Consider the following 56-residue polypeptide: Small ribosomal subunit protein uS14 (56 aa).

Zn(2+) is bound by residues cysteine 21, cysteine 24, cysteine 39, and cysteine 42.

It belongs to the universal ribosomal protein uS14 family. Zinc-binding uS14 subfamily. Part of the 30S ribosomal subunit. It depends on Zn(2+) as a cofactor.

Its function is as follows. Binds 16S rRNA, required for the assembly of 30S particles. This chain is Small ribosomal subunit protein uS14, found in Pyrococcus furiosus (strain ATCC 43587 / DSM 3638 / JCM 8422 / Vc1).